Here is a 225-residue protein sequence, read N- to C-terminus: ATP-dependent Clp protease proteolytic subunit (225 aa).

S123 (nucleophile) is an active-site residue. The active site involves H148.

It belongs to the peptidase S14 family. In terms of assembly, fourteen ClpP subunits assemble into 2 heptameric rings which stack back to back to give a disk-like structure with a central cavity, resembling the structure of eukaryotic proteasomes.

Its subcellular location is the cytoplasm. The catalysed reaction is Hydrolysis of proteins to small peptides in the presence of ATP and magnesium. alpha-casein is the usual test substrate. In the absence of ATP, only oligopeptides shorter than five residues are hydrolyzed (such as succinyl-Leu-Tyr-|-NHMec, and Leu-Tyr-Leu-|-Tyr-Trp, in which cleavage of the -Tyr-|-Leu- and -Tyr-|-Trp bonds also occurs).. Cleaves peptides in various proteins in a process that requires ATP hydrolysis. Has a chymotrypsin-like activity. Plays a major role in the degradation of misfolded proteins. The protein is ATP-dependent Clp protease proteolytic subunit of Chlorobaculum tepidum (strain ATCC 49652 / DSM 12025 / NBRC 103806 / TLS) (Chlorobium tepidum).